We begin with the raw amino-acid sequence, 326 residues long: Polycomb complex protein BMI-1-A (326 aa).

The RING-type zinc finger occupies cysteine 18 to aspartate 57. Residues lysine 81–arginine 95 carry the Nuclear localization signal motif. Disordered regions lie at residues asparagine 239 to glycine 262 and cysteine 274 to glycine 326. Positions isoleucine 290 to serine 303 are enriched in low complexity.

Component of a PRC1-like complex. Interacts with cbx4.

The protein resides in the nucleus. In terms of biological role, component of a Polycomb group (PcG) multiprotein PRC1-like complex, a complex class required to maintain the transcriptionally repressive state of many genes, including Hox genes, throughout development. PcG PRC1 complex acts via chromatin remodeling and modification of histones; it mediates monoubiquitination of histone H2A 'Lys-119', rendering chromatin heritably changed in its expressibility. In the PRC1 complex, it is required to stimulate the E3 ubiquitin-protein ligase activity of rnf2. In Xenopus laevis (African clawed frog), this protein is Polycomb complex protein BMI-1-A (bmi1a).